Consider the following 246-residue polypeptide: Glucosamine-6-phosphate deaminase (246 aa).

Asp67 functions as the Proton acceptor; for enolization step in the catalytic mechanism. Asn136 serves as the catalytic For ring-opening step. The active-site Proton acceptor; for ring-opening step is the His138. Catalysis depends on Glu143, which acts as the For ring-opening step.

The protein belongs to the glucosamine/galactosamine-6-phosphate isomerase family. NagB subfamily.

The catalysed reaction is alpha-D-glucosamine 6-phosphate + H2O = beta-D-fructose 6-phosphate + NH4(+). It functions in the pathway amino-sugar metabolism; N-acetylneuraminate degradation; D-fructose 6-phosphate from N-acetylneuraminate: step 5/5. Its function is as follows. Catalyzes the reversible isomerization-deamination of glucosamine 6-phosphate (GlcN6P) to form fructose 6-phosphate (Fru6P) and ammonium ion. This Halalkalibacterium halodurans (strain ATCC BAA-125 / DSM 18197 / FERM 7344 / JCM 9153 / C-125) (Bacillus halodurans) protein is Glucosamine-6-phosphate deaminase.